Here is a 588-residue protein sequence, read N- to C-terminus: Tripartite motif-containing protein 29 (588 aa).

The interval 1 to 66 (MEAADASRSN…GSALKPGEGR (66 aa)) is disordered. A phosphoserine mark is found at serine 21, serine 28, serine 58, and serine 104. A Phosphotyrosine modification is found at tyrosine 106. The segment at 220–260 (FEARKCPVHGKTMELFCQTDQTCICYLCMFQEHKNHSTVTV) adopts a B box-type zinc-finger fold. Residues cysteine 225, histidine 228, cysteine 247, and histidine 252 each coordinate Zn(2+). Residues 259 to 352 (TVEEAKAEKE…VKVIMDALDE (94 aa)) are a coiled coil. Residue threonine 476 is modified to Phosphothreonine. Serine 489 is subject to Phosphoserine.

In terms of assembly, interacts with VIM and HINT1. Interacts with IKBKG/NEMO. Interacts with STING1. Post-translationally, constitutively phosphorylated by PKC on serine/threonine in A431 cells. As to expression, expressed in placenta, prostate and thymus.

It localises to the cytoplasm. The protein resides in the lysosome. In terms of biological role, plays a crucial role in the regulation of macrophage activation in response to viral or bacterial infections within the respiratory tract. Mechanistically, TRIM29 interacts with IKBKG/NEMO in the lysosome where it induces its 'Lys-48' ubiquitination and subsequent degradation. In turn, the expression of type I interferons and the production of pro-inflammatory cytokines are inhibited. Additionally, induces the 'Lys-48' ubiquitination of STING1 in a similar way, leading to its degradation. This Homo sapiens (Human) protein is Tripartite motif-containing protein 29 (TRIM29).